An 856-amino-acid polypeptide reads, in one-letter code: Mechanosensitive ion channel protein 6 (856 aa).

2 disordered regions span residues Gly-45–Thr-86 and Arg-116–Ala-226. Composition is skewed to basic and acidic residues over residues Gln-70–Pro-85 and Thr-129–Arg-140. Residues Ser-155–Leu-168 are compositionally biased toward polar residues. Residue Ser-211 is modified to Phosphoserine. The span at Glu-217 to Ala-226 shows a compositional bias: acidic residues. 4 helical membrane passes run Ile-242–Ile-262, Leu-283–Ile-303, Ala-323–Glu-343, and Ile-360–Val-380. The residue at position 462 (Ser-462) is a Phosphoserine. 2 helical membrane-spanning segments follow: residues Met-615–Thr-635 and Ala-651–Ile-671.

This sequence belongs to the MscS (TC 1.A.23) family.

The protein resides in the membrane. Mechanosensitive channel that opens in response to stretch forces in the membrane lipid bilayer. This chain is Mechanosensitive ion channel protein 6 (MSL6), found in Arabidopsis thaliana (Mouse-ear cress).